The chain runs to 672 residues: Beta-galactosidase bgaB (672 aa).

Residue Arg109 coordinates substrate. Cys113 is a Zn(2+) binding site. Asn147 contributes to the substrate binding site. The Proton donor role is filled by Glu148. 3 residues coordinate Zn(2+): Cys156, Cys158, and Cys161. Glu303 functions as the Nucleophile in the catalytic mechanism. Residues Trp311 and 351-354 (EKFH) each bind substrate.

The protein belongs to the glycosyl hydrolase 42 family.

It catalyses the reaction Hydrolysis of terminal non-reducing beta-D-galactose residues in beta-D-galactosides.. By divalent metal ions. Fe(2+), Zn(2+), Cu(2+), Pb(2+) and Sn(2+) inhibit 52, 76.6, 85.3, 100 and 100% of the enzyme activity, respectively. Other metal cations and EDTA do not inhibit this enzyme. Thiol reagents 2-mercaptoethanol and dithiothreitol have no effect on the activity. Sulfhydryl group-blocking reagents p-chloromercuribenzoic acid and iodoacetic acid inhibit 86.2 and 74% of the enzyme activity, respectively. In terms of biological role, hydrolyzes 6-bromo-2-naphthyl-beta-D-galactopyranoside and o-nitrophenyl-beta-D-galactopyranoside (ONPG). Possesses a high level of transgalactosylation activity. Hydrolyzes lactose in milk. The sequence is that of Beta-galactosidase bgaB (bgaB) from Geobacillus kaustophilus.